Here is a 390-residue protein sequence, read N- to C-terminus: ATP phosphoribosyltransferase regulatory subunit (390 aa).

This sequence belongs to the class-II aminoacyl-tRNA synthetase family. HisZ subfamily. As to quaternary structure, heteromultimer composed of HisG and HisZ subunits.

Its subcellular location is the cytoplasm. Its pathway is amino-acid biosynthesis; L-histidine biosynthesis; L-histidine from 5-phospho-alpha-D-ribose 1-diphosphate: step 1/9. Functionally, required for the first step of histidine biosynthesis. May allow the feedback regulation of ATP phosphoribosyltransferase activity by histidine. The protein is ATP phosphoribosyltransferase regulatory subunit of Bacillus velezensis (strain DSM 23117 / BGSC 10A6 / LMG 26770 / FZB42) (Bacillus amyloliquefaciens subsp. plantarum).